Consider the following 169-residue polypeptide: 6,7-dimethyl-8-ribityllumazine synthase (169 aa).

5-amino-6-(D-ribitylamino)uracil is bound by residues Phe-24, 58–60, and 82–84; these read ALE and AVI. 87–88 lines the (2S)-2-hydroxy-3-oxobutyl phosphate pocket; the sequence is ET. The Proton donor role is filled by His-90. Residue Asn-115 coordinates 5-amino-6-(D-ribitylamino)uracil. Residue Arg-129 coordinates (2S)-2-hydroxy-3-oxobutyl phosphate.

Belongs to the DMRL synthase family.

The enzyme catalyses (2S)-2-hydroxy-3-oxobutyl phosphate + 5-amino-6-(D-ribitylamino)uracil = 6,7-dimethyl-8-(1-D-ribityl)lumazine + phosphate + 2 H2O + H(+). Its pathway is cofactor biosynthesis; riboflavin biosynthesis; riboflavin from 2-hydroxy-3-oxobutyl phosphate and 5-amino-6-(D-ribitylamino)uracil: step 1/2. Functionally, catalyzes the formation of 6,7-dimethyl-8-ribityllumazine by condensation of 5-amino-6-(D-ribitylamino)uracil with 3,4-dihydroxy-2-butanone 4-phosphate. This is the penultimate step in the biosynthesis of riboflavin. In Burkholderia vietnamiensis (strain G4 / LMG 22486) (Burkholderia cepacia (strain R1808)), this protein is 6,7-dimethyl-8-ribityllumazine synthase.